Here is a 62-residue protein sequence, read N- to C-terminus: MKTSILFVIFSLALVFALSPATEIEETDRACGQFWWKCGEGKPPCCANFACKIGLYLCIWSP.

The first 21 residues, M1–A21, serve as a signal peptide directing secretion. A propeptide spanning residues T22–R29 is cleaved from the precursor. 3 cysteine pairs are disulfide-bonded: C31–C46, C38–C51, and C45–C58.

Belongs to the neurotoxin 10 (Hwtx-1) family. 33 (Jztx-1) subfamily. In terms of tissue distribution, expressed by the venom gland.

It is found in the secreted. Moderately inhibits voltage-gated sodium channels and weakly inhibits voltage-gated potassium channel. Inhibits the inactivation of rat Nav1.2/SCN2A (IC(50)=870 nM), rat Nav1.3/SCN3A (IC(50)=845 nM), rat Nav1.4/SCN4A (IC(50)=339 nM), human Nav1.5/SCN5A (IC(50)=335 nM) and human Nav1.7/SCN9A sodium channels (IC(50)=348 nM). The toxin delays the inactivation of sodium channels without affecting the activation and steady-state inactivation kinetics in the physiological range of voltages. Site-directed mutagenesis of the sodium channel indicates that the toxin interacts with site 3 located at the extracellular S3-S4 linker of domain IV. On potassium channels, it inhibits activation of channels with an IC(50) of 8.05 uM through a voltage sensor-trapping mechanism. It increases muscle contraction in several assays (mouse phrenic nerve-diaphragm, toad heart, rat vas deferens) and is suggested to act both presynaptically and postsynaptically. This is Delta-theraphotoxin-Cg1a 3 from Chilobrachys guangxiensis (Chinese earth tiger tarantula).